The chain runs to 1008 residues: ATP-dependent DNA/RNA helicase DHX36 (1008 aa).

The segment at 1–51 is required for recruitment to cytoplasmic stress granules; the sequence is MSYDYHQNWGRDGGPRSSGGGYGGGPAGGHGGNRGSGGGGGGGGGGRGGRG. Residues 1–58 form a disordered region; sequence MSYDYHQNWGRDGGPRSSGGGYGGGPAGGHGGNRGSGGGGGGGGGGRGGRGRHPGHLK. Residues 1-104 form a required for the pre-miR-134 transport region; the sequence is MSYDYHQNWG…IVQLLNSVQA (104 aa). The segment at 1–200 is necessary for nuclear and nucleolar caps localizations; sequence MSYDYHQNWG…KKNDLRYIEM (200 aa). The segment covering 16-48 has biased composition (gly residues); that stretch reads RSSGGGYGGGPAGGHGGNRGSGGGGGGGGGGRG. The segment at 53-75 is DSM (DHX36-specific motif); it reads HPGHLKGREIGMWYAKKQGQKNK. The interval 53 to 105 is required for G4-DNA- and G4-RNA-binding; the sequence is HPGHLKGREIGMWYAKKQGQKNKEAERQERAVVHMDERREEQIVQLLNSVQAK. Residues 72 to 157 adopt a coiled-coil conformation; it reads QKNKEAERQE…INQEKKMFRI (86 aa). RecA-like domain regions lie at residues 106 to 386 and 387 to 628; these read NDKE…MIHI and PGFT…DYQL. Phosphoserine is present on serine 161. Residues 217–387 enclose the Helicase ATP-binding domain; that stretch reads VNLIDNHQVT…FGNCPMIHIP (171 aa). An ATP-binding site is contributed by 233 to 238; it reads GCGKTT. A necessary for interaction with single-stranded DNA at the 3'-end of the G4-DNA structure region spans residues 265–317; that stretch reads RRISAISVAERVAAERAESCGSGNSTGYQIRLQSRLPRKQGSILYCTTGIILQ. Positions 334–337 match the DEAH box motif; the sequence is DEIH. Residues glutamate 335 and histidine 337 each contribute to the Mg(2+) site. Residues 477–647 enclose the Helicase C-terminal domain; it reads ALIRYIVLEE…ELCLQIKILR (171 aa). Positions 498–557 are necessary for interaction with single-stranded DNA at the 3'-end of the G4-DNA structure; sequence WDNISTLHDLLMSQVMFKSDKFLIIPLHSLMPTVNQTQVFKRTPPGVRKIVIATNIAETS. A Nuclear localization signal motif is present at residues 517 to 528; sequence DKFLIIPLHSLM. ATP contacts are provided by residues serine 557 and 602–605; that span reads RAGR. A WH domain region spans residues 629 to 698; sequence PEILRTPLEE…LGVHLARLPV (70 aa). 3 necessary for interaction with single-stranded DNA at the 3'-end of the G4-DNA structure regions span residues 638 to 697, 849 to 860, and 870 to 900; these read ELCL…ARLP, NLGKKRKMVKVY, and HPKSVNVEQTDFHYNWLIYHLKMRTSSIYLY. The segment at 841–905 is OB-fold-like subdomains; the sequence is PKVAKIRLNL…SIYLYDCTEV (65 aa). At lysine 947 the chain carries N6-acetyllysine. Serine 963 is subject to Phosphoserine.

The protein belongs to the DEAD box helicase family. DEAH subfamily. As to quaternary structure, found in a multi-helicase-TICAM1 complex at least composed of DHX36, DDX1, DDX21 and TICAM1; this complex exists in resting cells with or without dsRNA poly(I:C) ligand stimulation. Interacts (via C-terminus) with TICAM1 (via TIR domain). Interacts (via C-terminus) with DDX21; this interaction serves as bridges to TICAM1. Interacts with TERT; this interaction is dependent on the ability of DHX36 to bind to the G-quadruplex RNA (G4-RNA) structure present in the telomerase RNA template component (TERC). Interacts with DKC1; this interaction is dependent on the ability of DHX36 to bind to the G4-RNA structure present in TERC. Interacts with PARN; this interaction stimulates PARN to enhance uPA mRNA decay. Interacts with EXOSC3; this interaction occurs in a RNase-insensitive manner. Interacts with EXOSC10; this interaction occurs in a RNase-insensitive manner. Interacts with ILF3; this interaction occurs in a RNA-dependent manner. Interacts with ELAVL1; this interaction occurs in an RNA-dependent manner. Interacts with DDX5; this interaction occurs in a RNA-dependent manner. Interacts with DDX17; this interaction occurs in a RNA-dependent manner. Interacts with HDAC1; this interaction occurs in a RNA-dependent manner. Interacts with HDAC3; this interaction occurs in a RNA-dependent manner. Interacts with HDAC4. Interacts with AGO1. Interacts with AGO2. Interacts with ERCC6. It depends on Mg(2+) as a cofactor. In terms of tissue distribution, highly expressed in testis.

It is found in the nucleus. It localises to the cytoplasm. Its subcellular location is the cytosol. The protein resides in the stress granule. The protein localises to the nucleus speckle. It is found in the chromosome. It localises to the telomere. Its subcellular location is the mitochondrion. The protein resides in the perikaryon. The protein localises to the cell projection. It is found in the dendrite. It localises to the axon. It catalyses the reaction ATP + H2O = ADP + phosphate + H(+). ATPase activity is enhanced in the presence of homomeric poly(U) RNAs, but not by double-stranded DNA (dsDNA), double-stranded RNA (dsRNA) and tRNA. Multifunctional ATP-dependent helicase that unwinds G-quadruplex (G4) structures. Plays a role in many biological processes such as genomic integrity, gene expression regulations and as a sensor to initiate antiviral responses. G4 structures correspond to helical structures containing guanine tetrads. Binds with high affinity to and unwinds G4 structures that are formed in nucleic acids (G4-DNA and G4-RNA). Plays a role in genomic integrity. Converts the G4-RNA structure present in telomerase RNA template component (TREC) into a double-stranded RNA to promote P1 helix formation that acts as a template boundary ensuring accurate reverse transcription. Plays a role in transcriptional regulation. Resolves G4-DNA structures in promoters of genes, such as YY1, KIT/c-kit and ALPL and positively regulates their expression. Plays a role in post-transcriptional regulation. Unwinds a G4-RNA structure located in the 3'-UTR polyadenylation site of the pre-mRNA TP53 and stimulates TP53 pre-mRNA 3'-end processing in response to ultraviolet (UV)-induced DNA damage. Binds to the precursor-microRNA-134 (pre-miR-134) terminal loop and regulates its transport into the synapto-dendritic compartment. Involved in the pre-miR-134-dependent inhibition of target gene expression and the control of dendritic spine size. Plays a role in the regulation of cytoplasmic mRNA translation and mRNA stability. Binds to both G4-RNA structures and alternative non-quadruplex-forming sequence within the 3'-UTR of the PITX1 mRNA regulating negatively PITX1 protein expression. Binds to both G4-RNA structure in the 5'-UTR and AU-rich elements (AREs) localized in the 3'-UTR of NKX2-5 mRNA to either stimulate protein translation or induce mRNA decay in an ELAVL1-dependent manner, respectively. Also binds to ARE sequences present in several mRNAs mediating exosome-mediated 3'-5' mRNA degradation. Involved in cytoplasmic urokinase-type plasminogen activator (uPA) mRNA decay. Component of a multi-helicase-TICAM1 complex that acts as a cytoplasmic sensor of viral double-stranded RNA (dsRNA) and plays a role in the activation of a cascade of antiviral responses including the induction of pro-inflammatory cytokines via the adapter molecule TICAM1. Required for early embryonic development and hematopoiesis. Involved in the regulation of cardioblast differentiation and proliferation during heart development. Involved in spermatogonia differentiation. May play a role in ossification. The polypeptide is ATP-dependent DNA/RNA helicase DHX36 (Homo sapiens (Human)).